Here is a 758-residue protein sequence, read N- to C-terminus: Spastin (758 aa).

The disordered stretch occupies residues 1–103 (MVRTKNQSSS…SPRSGHHHSY (103 aa)). Residues 1–121 (MVRTKNQSSS…KQNLYVVSFP (121 aa)) lie on the Cytoplasmic side of the membrane. The tract at residues 1-210 (MVRTKNQSSS…RPIQPLEMAA (210 aa)) is required for localization to punctate cytoplasmic foci. Low complexity-rich tracts occupy residues 8–28 (SSSS…SSGA), 43–58 (RSSS…AGGS), 66–76 (SSNRRSPGSSP), and 85–95 (TDDLTPTTCSP). Residues 122 to 142 (IIFLFNVLRSLIYQLFCIFRY) constitute an intramembrane region (helical). Topologically, residues 143–758 (LYGASTKVIY…WSQDYGDITI (616 aa)) are cytoplasmic. Polar residues-rich tracts occupy residues 169-180 (SKEQQQSLNHPS) and 189-198 (QEQQLSNQPQ). The tract at residues 169–202 (SKEQQQSLNHPSELNREGDGQEQQLSNQPQRFRP) is disordered. Residues 208–758 (MAANRPGGGY…WSQDYGDITI (551 aa)) form a sufficient for interaction with microtubules and microtubule severing region. Positions 233–308 (HRRAFEYISK…SMARDRLHFL (76 aa)) constitute an MIT domain. The segment at 353-454 (RVRSSGYGPK…GPSGSGASTP (102 aa)) is disordered. Composition is skewed to polar residues over residues 390-406 (NKSQ…TSVG) and 425-454 (QFSS…ASTP). The interval 443-455 (NNGPSGSGASTPV) is required for interaction with microtubules. 523–530 (GPPGNGKT) is a binding site for ATP.

The protein belongs to the AAA ATPase family. Spastin subfamily. Homohexamer. The homohexamer is stabilized by ATP-binding. The homohexamer may adopt a ring conformation through which microtubules pass prior to being severed. Interacts with microtubules. Interacts with atl; may be involved in microtubule dynamics.

The protein resides in the membrane. The protein localises to the cytoplasm. It is found in the cytoskeleton. It localises to the microtubule organizing center. Its subcellular location is the centrosome. The protein resides in the chromosome. The protein localises to the lipid droplet. The enzyme catalyses n ATP + n H2O + a microtubule = n ADP + n phosphate + (n+1) alpha/beta tubulin heterodimers.. Its function is as follows. ATP-dependent microtubule severing protein. Stimulates microtubule minus-end depolymerization and poleward microtubule flux in the mitotic spindle. Regulates microtubule stability in the neuromuscular junction synapse. Involved in lipid metabolism by regulating the size and distribution of lipid droplets. Involved in axon regeneration by regulating microtubule severing. This Drosophila sechellia (Fruit fly) protein is Spastin.